Reading from the N-terminus, the 449-residue chain is Neurexin-1a-beta (449 aa).

The signal sequence occupies residues 1–38 (MLRLWPGGAPGGLASILLRISLRLALWLPPLTLGSALA). Residues 39–373 (EGPGELYVPQ…EVIRESSSTT (335 aa)) are Extracellular-facing. In terms of domain architecture, Laminin G-like spans 71-272 (TTYIFGRDGG…DPNVRVEGSA (202 aa)). Residues 276 to 366 (GDMPSSSITP…AKGYPSPEVI (91 aa)) are disordered. A compositionally biased stretch (low complexity) spans 280-311 (SSSITPQSSVSAAGNRSETSPSITDITTTTAS). Residues 312–322 (NRQGKQTTTPQ) are compositionally biased toward polar residues. A helical membrane pass occupies residues 374 to 394 (GMVVGIVAAAALCILILLYAM). Residues 395–449 (YKYRNRDEGSYHVDESRNYISNSATQPNGAAVKEKPIGVPKNKKDKKNKDKEYYV) lie on the Cytoplasmic side of the membrane. Residues 415–449 (SNSATQPNGAAVKEKPIGVPKNKKDKKNKDKEYYV) are disordered.

Belongs to the neurexin family.

It localises to the membrane. Its function is as follows. Neuronal cell surface protein that may be involved in cell recognition and cell adhesion. May play a role in formation or maintenance of synaptic junctions. The chain is Neurexin-1a-beta (nrxn1a) from Danio rerio (Zebrafish).